The sequence spans 345 residues: Phenylalanine--tRNA ligase alpha subunit (345 aa).

A Mg(2+)-binding site is contributed by glutamate 266.

Belongs to the class-II aminoacyl-tRNA synthetase family. Phe-tRNA synthetase alpha subunit type 1 subfamily. Tetramer of two alpha and two beta subunits. The cofactor is Mg(2+).

It is found in the cytoplasm. It carries out the reaction tRNA(Phe) + L-phenylalanine + ATP = L-phenylalanyl-tRNA(Phe) + AMP + diphosphate + H(+). This chain is Phenylalanine--tRNA ligase alpha subunit, found in Methylibium petroleiphilum (strain ATCC BAA-1232 / LMG 22953 / PM1).